Reading from the N-terminus, the 466-residue chain is Protein hob1 (466 aa).

The region spanning 17-269 is the BAR domain; that stretch reads LRSKFNVGEI…RGDVKDRAEA (253 aa). Coiled-coil stretches lie at residues 31–67 and 177–204; these read IYEDAGRRFKSLETEAKKLAEDAKKYTDAINGLLNHQ and EKKLYEAETAFEQSSQEYEYYNEMLKEE. Positions 280–342 are disordered; the sequence is PTYKRPGMGP…ASDYSTPSAG (63 aa). Positions 294–303 are enriched in low complexity; sequence ATASSSSSFS. Phosphoserine is present on residues Ser298, Ser299, Ser301, and Ser303. The SH3 domain occupies 407–466; it reads PAAEHVVALYDYAAQAAGDLSFHAGDRIEVVSRTDNQNEWWIGRLNGAQGQFPGNYVQLE.

Functionally, has a role in DNA damage signaling as a part of stress response processes. The polypeptide is Protein hob1 (hob1) (Schizosaccharomyces pombe (strain 972 / ATCC 24843) (Fission yeast)).